Reading from the N-terminus, the 332-residue chain is Biotin synthase (332 aa).

Residues 46-275 (SDIQRASLLS…RARVRLSAGR (230 aa)) enclose the Radical SAM core domain. [4Fe-4S] cluster contacts are provided by cysteine 61, cysteine 65, and cysteine 68. The [2Fe-2S] cluster site is built by cysteine 106, cysteine 138, cysteine 198, and arginine 270.

Belongs to the radical SAM superfamily. Biotin synthase family. As to quaternary structure, homodimer. Requires [4Fe-4S] cluster as cofactor. It depends on [2Fe-2S] cluster as a cofactor.

The catalysed reaction is (4R,5S)-dethiobiotin + (sulfur carrier)-SH + 2 reduced [2Fe-2S]-[ferredoxin] + 2 S-adenosyl-L-methionine = (sulfur carrier)-H + biotin + 2 5'-deoxyadenosine + 2 L-methionine + 2 oxidized [2Fe-2S]-[ferredoxin]. It functions in the pathway cofactor biosynthesis; biotin biosynthesis; biotin from 7,8-diaminononanoate: step 2/2. Functionally, catalyzes the conversion of dethiobiotin (DTB) to biotin by the insertion of a sulfur atom into dethiobiotin via a radical-based mechanism. The protein is Biotin synthase of Methylobacterium sp. (strain 4-46).